A 125-amino-acid chain; its full sequence is Histone H2A, orphon (125 aa).

Over residues 1 to 18 the composition is skewed to basic residues; sequence MSGRGKGGKVKAKAKSRS. Positions 1–21 are disordered; sequence MSGRGKGGKVKAKAKSRSSRA. Serine 2 bears the N-acetylserine mark. Phosphoserine is present on serine 2. A Glycyl lysine isopeptide (Lys-Gly) (interchain with G-Cter in ubiquitin) cross-link involves residue lysine 119.

Belongs to the histone H2A family. In terms of assembly, the nucleosome is a histone octamer containing two molecules each of H2A, H2B, H3 and H4 assembled in one H3-H4 heterotetramer and two H2A-H2B heterodimers. The octamer wraps approximately 147 bp of DNA. Monoubiquitination of Lys-119 gives a specific tag for epigenetic transcriptional repression. In terms of processing, phosphorylation on Ser-2 is enhanced during mitosis. Phosphorylation on Ser-2 directly represses transcription.

Its subcellular location is the nucleus. The protein resides in the chromosome. Core component of nucleosome. Nucleosomes wrap and compact DNA into chromatin, limiting DNA accessibility to the cellular machineries which require DNA as a template. Histones thereby play a central role in transcription regulation, DNA repair, DNA replication and chromosomal stability. DNA accessibility is regulated via a complex set of post-translational modifications of histones, also called histone code, and nucleosome remodeling. This is Histone H2A, orphon from Chironomus thummi thummi (Midge).